The primary structure comprises 176 residues: ATP-dependent protease subunit HslV (176 aa).

Residue threonine 2 is part of the active site. Residues glycine 158, cysteine 161, and threonine 164 each coordinate Na(+).

This sequence belongs to the peptidase T1B family. HslV subfamily. A double ring-shaped homohexamer of HslV is capped on each side by a ring-shaped HslU homohexamer. The assembly of the HslU/HslV complex is dependent on binding of ATP.

Its subcellular location is the cytoplasm. It carries out the reaction ATP-dependent cleavage of peptide bonds with broad specificity.. Its activity is regulated as follows. Allosterically activated by HslU binding. Protease subunit of a proteasome-like degradation complex believed to be a general protein degrading machinery. The chain is ATP-dependent protease subunit HslV from Pasteurella multocida (strain Pm70).